The sequence spans 667 residues: Mannosyl-oligosaccharide alpha-1,2-mannosidase IA (667 aa).

The Cytoplasmic segment spans residues 1 to 18; it reads MYRISPIGRKSNFHSREK. A helical; Signal-anchor for type II membrane protein membrane pass occupies residues 19-39; the sequence is CLIGLVLVTLCFLCFGGIFLL. The Lumenal portion of the chain corresponds to 40–667; the sequence is PDNFGSDRVL…PVTLPVSNAS (628 aa). Positions 154–192 are disordered; that stretch reads GDNAASQASSHPQSSAQQHNQQQPQLPLGGGGNDQAPDT. Residues 156 to 178 show a composition bias toward low complexity; the sequence is NAASQASSHPQSSAQQHNQQQPQ. N-linked (GlcNAc...) asparagine glycosylation is present at Asn278. An intrachain disulfide couples Cys483 to Cys515. Residue Glu529 is the Proton donor of the active site. Residue Thr640 participates in Ca(2+) binding.

It belongs to the glycosyl hydrolase 47 family. It depends on Ca(2+) as a cofactor. Requires Mg(2+) as cofactor. In terms of tissue distribution, complex spatial distribution during embryogenesis, including expression in lobula plate giant neurons. Also expressed in adult wing and eyes.

The protein localises to the golgi apparatus membrane. It catalyses the reaction N(4)-(alpha-D-Man-(1-&gt;2)-alpha-D-Man-(1-&gt;2)-alpha-D-Man-(1-&gt;3)-[alpha-D-Man-(1-&gt;2)-alpha-D-Man-(1-&gt;3)-[alpha-D-Man-(1-&gt;2)-alpha-D-Man-(1-&gt;6)]-alpha-D-Man-(1-&gt;6)]-beta-D-Man-(1-&gt;4)-beta-D-GlcNAc-(1-&gt;4)-beta-D-GlcNAc)-L-asparaginyl-[protein] (N-glucan mannose isomer 9A1,2,3B1,2,3) + 4 H2O = N(4)-(alpha-D-Man-(1-&gt;3)-[alpha-D-Man-(1-&gt;3)-[alpha-D-Man-(1-&gt;6)]-alpha-D-Man-(1-&gt;6)]-beta-D-Man-(1-&gt;4)-beta-D-GlcNAc-(1-&gt;4)-beta-D-GlcNAc)-L-asparaginyl-[protein] (N-glucan mannose isomer 5A1,2) + 4 beta-D-mannose. It carries out the reaction N(4)-(alpha-D-Man-(1-&gt;2)-alpha-D-Man-(1-&gt;2)-alpha-D-Man-(1-&gt;3)-[alpha-D-Man-(1-&gt;3)-[alpha-D-Man-(1-&gt;2)-alpha-D-Man-(1-&gt;6)]-alpha-D-Man-(1-&gt;6)]-beta-D-Man-(1-&gt;4)-beta-D-GlcNAc-(1-&gt;4)-beta-D-GlcNAc)-L-asparaginyl-[protein] (N-glucan mannose isomer 8A1,2,3B1,3) + 3 H2O = N(4)-(alpha-D-Man-(1-&gt;3)-[alpha-D-Man-(1-&gt;3)-[alpha-D-Man-(1-&gt;6)]-alpha-D-Man-(1-&gt;6)]-beta-D-Man-(1-&gt;4)-beta-D-GlcNAc-(1-&gt;4)-beta-D-GlcNAc)-L-asparaginyl-[protein] (N-glucan mannose isomer 5A1,2) + 3 beta-D-mannose. Its pathway is protein modification; protein glycosylation. In terms of biological role, involved in the maturation of Asn-linked oligosaccharides. Progressively trim alpha-1,2-linked mannose residues from Man(9)GlcNAc(2) to produce Man(5)GlcNAc(2). The polypeptide is Mannosyl-oligosaccharide alpha-1,2-mannosidase IA (Drosophila melanogaster (Fruit fly)).